A 753-amino-acid chain; its full sequence is Putative cyclic nucleotide-gated ion channel 8 (753 aa).

Residues 1–111 (MYKSQYISGH…DKTLLLWNRM (111 aa)) are Cytoplasmic-facing. Residues 112-132 (FVISCILAVSVDPLFFYLPIV) form a helical membrane-spanning segment. Over 133–145 (DNSKNCIGIDSKL) the chain is Extracellular. A helical transmembrane segment spans residues 146–166 (AVTTTTLRTIIDVFYLTRMAL). Over 167 to 199 (QFRTAYIAPSSRVFGRGELVIDPAKIAERYLTR) the chain is Cytoplasmic. The helical transmembrane segment at 200–220 (YFIVDFLAVLPLPQIAVWKFL) threads the bilayer. The Extracellular portion of the chain corresponds to 221–233 (HGSKGTDVLPTKQ). Residues 234–254 (ALLHIVITQYIPRFVRFIPLT) form a helical membrane-spanning segment. At 255–274 (SELKKTAGAFAEGAWAGAAY) the chain is on the cytoplasmic side. A helical transmembrane segment spans residues 275-295 (YLLWYMLASHITGAFWYMLSV). Topologically, residues 296 to 402 (ERNDTCLRSA…QGLQTSTYPG (107 aa)) are extracellular. Residues 403 to 423 (EVLFSIAIAVAGLLLFALLIG) traverse the membrane as a helical segment. Residues 424-753 (NMQTYLQSLT…FEALDTDDLN (330 aa)) lie on the Cytoplasmic side of the membrane. Residues 508–638 (LFAN…TFRF) and E579 each bind a nucleoside 3',5'-cyclic phosphate. A calmodulin-binding region spans residues 624-639 (FRRLHSRQVQQTFRFY). An IQ domain is found at 644–673 (RTWAACFIQAAWRRHLRRKIAELRRKEEEE). Residues 731–753 (KSLMNLTKPSEPDFEALDTDDLN) are disordered. Acidic residues predominate over residues 742 to 753 (PDFEALDTDDLN).

This sequence belongs to the cyclic nucleotide-gated cation channel (TC 1.A.1.5) family. As to quaternary structure, homotetramer or heterotetramer.

It localises to the cell membrane. Its function is as follows. Putative cyclic nucleotide-gated ion channel. The sequence is that of Putative cyclic nucleotide-gated ion channel 8 (CNGC8) from Arabidopsis thaliana (Mouse-ear cress).